The chain runs to 106 residues: MAPLIPGELIPEPGELELNAGRPVTTISVANGGDRPVQVGSHFHFAEANAALQFDRDAARGQRLDIPAGTAIRFEPGDHRDVNLIPFAGHRRVIGFNGRINGPIDA.

It belongs to the urease beta subunit family. In terms of assembly, heterotrimer of UreA (gamma), UreB (beta) and UreC (alpha) subunits. Three heterotrimers associate to form the active enzyme.

It localises to the cytoplasm. The catalysed reaction is urea + 2 H2O + H(+) = hydrogencarbonate + 2 NH4(+). It functions in the pathway nitrogen metabolism; urea degradation; CO(2) and NH(3) from urea (urease route): step 1/1. The chain is Urease subunit beta from Synechococcus sp. (strain CC9902).